A 622-amino-acid chain; its full sequence is Membrane protein insertase YidC (622 aa).

A helical membrane pass occupies residues 6–26 (IVLLIIFSTSLLFLWDAWVKE). The segment at 47 to 87 (TQSKNNDGLPIPGSELTASQTGSDLNGIPSSGDTADSVTPR) is disordered. The span at 62 to 83 (LTASQTGSDLNGIPSSGDTADS) shows a compositional bias: polar residues. The next 3 membrane-spanning stretches (helical) occupy residues 381-401 (WGIA…PLSA), 451-471 (FPIL…LAAV), and 525-545 (PVAF…YSLV). The interval 563 to 622 (TAPSQDAPESPASKDAPELPVSNQVINDSENTEAPASGPADSPKKPVNIPRRMHKRTRKK) is disordered. Over residues 583–596 (VSNQVINDSENTEA) the composition is skewed to polar residues. Basic residues predominate over residues 613–622 (RRMHKRTRKK).

Belongs to the OXA1/ALB3/YidC family. Type 1 subfamily. In terms of assembly, interacts with the Sec translocase complex via SecD. Specifically interacts with transmembrane segments of nascent integral membrane proteins during membrane integration.

The protein localises to the cell inner membrane. Functionally, required for the insertion and/or proper folding and/or complex formation of integral membrane proteins into the membrane. Involved in integration of membrane proteins that insert both dependently and independently of the Sec translocase complex, as well as at least some lipoproteins. Aids folding of multispanning membrane proteins. This is Membrane protein insertase YidC from Nitrosomonas eutropha (strain DSM 101675 / C91 / Nm57).